A 1423-amino-acid polypeptide reads, in one-letter code: Histone-lysine N-methyltransferase ATXR7 (1423 aa).

Residues 263–312 (HACWFLVDGEGRNHGPHSILELFSWQQHGYVSDAALIRDGENKLRPITLA) form the GYF domain. Disordered regions lie at residues 923–960 (CKDHEESLSNKPSQKVKKAHTSKLKRKNLSDARDEGTK), 1057–1097 (CSIS…SSTD), and 1115–1158 (LPCH…GRPK). Basic residues predominate over residues 936 to 949 (QKVKKAHTSKLKRK). Over residues 950–959 (NLSDARDEGT) the composition is skewed to basic and acidic residues. The segment covering 1057–1071 (CSISQKGRKSSQSSI) has biased composition (polar residues). 2 stretches are compositionally biased toward basic and acidic residues: residues 1115 to 1124 (LPCHTSDKLQ) and 1140 to 1157 (HTTERSPIKDLSVDDGRP). The region spanning 1266–1383 (KHLRFQQSKI…AGEEISYNYK (118 aa)) is the SET domain. Y1382 lines the S-adenosyl-L-methionine pocket.

The protein belongs to the class V-like SAM-binding methyltransferase superfamily. Histone-lysine methyltransferase family. TRX/MLL subfamily. Expressed in the shoot and root apices, vascular tissues and mesophyll cells of rosette leaves.

The protein resides in the nucleus. The catalysed reaction is L-lysyl(4)-[histone H3] + 3 S-adenosyl-L-methionine = N(6),N(6),N(6)-trimethyl-L-lysyl(4)-[histone H3] + 3 S-adenosyl-L-homocysteine + 3 H(+). It catalyses the reaction L-lysyl(36)-[histone H3] + 2 S-adenosyl-L-methionine = N(6),N(6)-dimethyl-L-lysyl(36)-[histone H3] + 2 S-adenosyl-L-homocysteine + 2 H(+). In terms of biological role, histone methyltransferase involved in regulation of flowering time. Required for the expression of the flowering repressors FLC and MADS-box genes of the MAF family. Required for histone H3 dimethylation on 'Lys-36' H3K36me2 at the FLC locus. Required for histone H3 trimethylation on 'Lys-4' (H3K4me3) at the FLC locus. Prevents trimethylation on 'Lys-27' (H3K27me3) at the same locus. Involved in the control of seed dormancy and germination. The polypeptide is Histone-lysine N-methyltransferase ATXR7 (Arabidopsis thaliana (Mouse-ear cress)).